We begin with the raw amino-acid sequence, 155 residues long: MRKNRAEKRDVLADPIYNSKLVTRAINKIMLDGKRGIAQSIIYDAFNIIKEKTNKEPIEVFNKAIENIKPHLELKVRRIGGANYQVPIEVSAERQITLALRWLINYARLRNEKVMTIKLANEIIDASNNIGGSVKKREDTHKMAEANKAFAHYRW.

This sequence belongs to the universal ribosomal protein uS7 family. As to quaternary structure, part of the 30S ribosomal subunit. Contacts proteins S9 and S11.

Its function is as follows. One of the primary rRNA binding proteins, it binds directly to 16S rRNA where it nucleates assembly of the head domain of the 30S subunit. Is located at the subunit interface close to the decoding center, probably blocks exit of the E-site tRNA. The chain is Small ribosomal subunit protein uS7 from Mycoplasma mycoides subsp. mycoides SC (strain CCUG 32753 / NCTC 10114 / PG1).